Here is a 94-residue protein sequence, read N- to C-terminus: Small ribosomal subunit protein uS19 (94 aa).

The protein belongs to the universal ribosomal protein uS19 family.

In terms of biological role, protein S19 forms a complex with S13 that binds strongly to the 16S ribosomal RNA. The protein is Small ribosomal subunit protein uS19 of Wolbachia pipientis wMel.